Consider the following 150-residue polypeptide: MQIILLEKVVNLGNLGDVVRVKDGYARNFLIPNKQARRATASAIQEFEARRAELEKLAAERLAAAQAEGEKLNGLTLQLSQKAGVDGRLFGSVTNHDIAAALTAQGFKVEKAQVRMPNGPLKTVGDHPVAVSLHTDVSVDVTVSVLGETV.

This sequence belongs to the bacterial ribosomal protein bL9 family.

Binds to the 23S rRNA. The polypeptide is Large ribosomal subunit protein bL9 (Ralstonia nicotianae (strain ATCC BAA-1114 / GMI1000) (Ralstonia solanacearum)).